The sequence spans 142 residues: Glycine-rich RNA-binding protein 1 (142 aa).

The RRM domain maps to 1–65 (NSLHSAFSTY…RNITVNEAQS (65 aa)). The disordered stretch occupies residues 48–101 (MNGKELDGRNITVNEAQSRGGRGGGGGGGYGGGRGGGGGYGRRDGGGGGYGGGG). Over residues 67 to 101 (GGRGGGGGGGYGGGRGGGGGYGRRDGGGGGYGGGG) the composition is skewed to gly residues.

Functionally, possibly has a role in RNA transcription or processing during stress. The protein is Glycine-rich RNA-binding protein 1 (GRP1) of Sorghum bicolor (Sorghum).